The following is a 383-amino-acid chain: Transposase InsI for insertion sequence element IS30C (383 aa).

The Integrase catalytic domain maps to 213–379 (VNGTPIHERS…TPKEIIERGV (167 aa)).

This sequence belongs to the transposase IS30 family.

Functionally, required for the transposition of the insertion element. The sequence is that of Transposase InsI for insertion sequence element IS30C (insI3) from Escherichia coli (strain K12).